The primary structure comprises 374 residues: Phospho-2-dehydro-3-deoxyheptonate aldolase AMT16 (374 aa).

This sequence belongs to the class-I DAHP synthase family.

It carries out the reaction D-erythrose 4-phosphate + phosphoenolpyruvate + H2O = 7-phospho-2-dehydro-3-deoxy-D-arabino-heptonate + phosphate. The protein operates within mycotoxin biosynthesis. Nonribosomal peptide synthetase; part of the gene clusters that mediate the biosynthesis of AM-toxins, host-selective toxins (HSTs) causing Alternaria blotch on apple, a worldwide distributed disease. AM-toxins are cyclic depsipeptides containing the 3 residues 2-hydroxy-isovaleric acid (2-HIV), dehydroalanine, L-alanine which are common for all 3 AM-toxins I to III. The fourth precursor is L-alpha-amino-methoxyphenyl-valeric acid (L-Amv) for AM-toxin I, L-alpha-amino-phenyl-valeric acid (L-Apv) for AM-toxin II, and L-alpha-amino-hydroxyphenyl-valeric acid (L-Ahv) for AM-toxin III. AM-toxins have two target sites for affecting susceptible apple cells; they cause invagination of the plasma membrane and electrolyte loss and chloroplast disorganization. The non-ribosomal peptide synthetase AMT1 contains 4 catalytic modules and is responsible for activation of each residue in AM-toxin. The aldo-keto reductase AMT2 catalyzes the conversion of 2-keto-isovaleric acid (2-KIV) to 2-hydroxy-isovaleric acid (2-HIV), one of the precursor residues incorporated by AMT1 during AM-toxin biosynthesis, by reduction of its ketone to an alcohol. The cytochrome P450 monooxygenase AMT3 and the thioesterase AMT4 are also important for AM-toxin production, but their exact function within the AM-toxin biosynthesis are not known yet. Up to 21 proteins (including AMT1 to AMT4) are predicted to be involved in AM-toxin biosynthesis since their expression ishighly up-regulated in AM-toxin-producing cultures. This is Phospho-2-dehydro-3-deoxyheptonate aldolase AMT16 from Alternaria alternata (Alternaria rot fungus).